The following is a 204-amino-acid chain: GTP cyclohydrolase 1 (204 aa).

Residues Cys92, His95, and Cys165 each coordinate Zn(2+).

This sequence belongs to the GTP cyclohydrolase I family. As to quaternary structure, homomer.

The enzyme catalyses GTP + H2O = 7,8-dihydroneopterin 3'-triphosphate + formate + H(+). The protein operates within cofactor biosynthesis; 7,8-dihydroneopterin triphosphate biosynthesis; 7,8-dihydroneopterin triphosphate from GTP: step 1/1. The polypeptide is GTP cyclohydrolase 1 (Mycobacterium avium (strain 104)).